An 87-amino-acid chain; its full sequence is Small ribosomal subunit protein uS17 (87 aa).

It belongs to the universal ribosomal protein uS17 family. In terms of assembly, part of the 30S ribosomal subunit.

In terms of biological role, one of the primary rRNA binding proteins, it binds specifically to the 5'-end of 16S ribosomal RNA. This Geobacillus thermodenitrificans (strain NG80-2) protein is Small ribosomal subunit protein uS17.